The chain runs to 415 residues: Serine hydroxymethyltransferase (415 aa).

(6S)-5,6,7,8-tetrahydrofolate contacts are provided by residues Leu121 and 125-127 (GHL). Lys229 carries the N6-(pyridoxal phosphate)lysine modification.

The protein belongs to the SHMT family. In terms of assembly, homodimer. The cofactor is pyridoxal 5'-phosphate.

The protein localises to the cytoplasm. It catalyses the reaction (6R)-5,10-methylene-5,6,7,8-tetrahydrofolate + glycine + H2O = (6S)-5,6,7,8-tetrahydrofolate + L-serine. It functions in the pathway one-carbon metabolism; tetrahydrofolate interconversion. The protein operates within amino-acid biosynthesis; glycine biosynthesis; glycine from L-serine: step 1/1. Its function is as follows. Catalyzes the reversible interconversion of serine and glycine with tetrahydrofolate (THF) serving as the one-carbon carrier. This reaction serves as the major source of one-carbon groups required for the biosynthesis of purines, thymidylate, methionine, and other important biomolecules. Also exhibits THF-independent aldolase activity toward beta-hydroxyamino acids, producing glycine and aldehydes, via a retro-aldol mechanism. This is Serine hydroxymethyltransferase from Bordetella petrii (strain ATCC BAA-461 / DSM 12804 / CCUG 43448).